A 392-amino-acid chain; its full sequence is 26S proteasome regulatory subunit 8 homolog (392 aa).

176–183 contributes to the ATP binding site; that stretch reads GPPGTGKT.

It belongs to the AAA ATPase family. As to quaternary structure, the 26S proteasome consists of a 20S proteasome core and two 19S regulatory subunits. The 20S proteasome core is composed of 28 subunits that are arranged in four stacked rings, resulting in a barrel-shaped structure. The two end rings are each formed by seven alpha subunits, and the two central rings are each formed by seven beta subunits. The catalytic chamber with the active sites is on the inside of the barrel.

The protein resides in the cytoplasm. The protein localises to the nucleus. Acts as a regulatory subunit of the 26S proteasome which degrades poly-ubiquitinated proteins in the cytoplasm and in the nucleus. It is essential for the regulated turnover of proteins and for the removal of misfolded proteins. The proteasome is a multicatalytic proteinase complex that is characterized by its ability to cleave peptides with Arg, Phe, Tyr, Leu, and Glu adjacent to the leaving group at neutral or slightly basic pH. The chain is 26S proteasome regulatory subunit 8 homolog (RPT6) from Encephalitozoon cuniculi (strain GB-M1) (Microsporidian parasite).